A 510-amino-acid chain; its full sequence is Pectinesterase 2 (510 aa).

A signal peptide spans 1-19; that stretch reads MALRILITVSLVLFSLSHT. N-linked (GlcNAc...) asparagine glycosylation is found at N110 and N158. Substrate-binding residues include T275 and Q305. Catalysis depends on D328, which acts as the Proton donor. C342 and C362 are oxidised to a cystine. The active-site Nucleophile is the D349. Residues N371 and N385 are each glycosylated (N-linked (GlcNAc...) asparagine). Substrate-binding residues include R416 and W418.

The protein in the N-terminal section; belongs to the PMEI family. This sequence in the C-terminal section; belongs to the pectinesterase family. As to expression, expressed at low levels in young leaves, young bark, young fruit, mature fruit vesicles, shoots and flower buds, young bark and juice vesicles. In both leaf and fruit abscission zones, and mature leaves, expression was initially undetectable but increased markedly following ethylene treatment.

Its subcellular location is the secreted. The protein localises to the cell wall. The catalysed reaction is [(1-&gt;4)-alpha-D-galacturonosyl methyl ester](n) + n H2O = [(1-&gt;4)-alpha-D-galacturonosyl](n) + n methanol + n H(+). Its pathway is glycan metabolism; pectin degradation; 2-dehydro-3-deoxy-D-gluconate from pectin: step 1/5. In terms of biological role, acts in the modification of cell walls via demethylesterification of cell wall pectin. This is Pectinesterase 2 (PECS-2.1) from Citrus sinensis (Sweet orange).